Consider the following 173-residue polypeptide: LNREGRSRLLESFQRVDGHFRTLFLKLFGGGRAHLTLIESDDPLEAGLEIMASPPGKRLQSLGLLSGGEQALTATALLFAVFLTNPAPICVLDEVDAPLDDANVDRFCAMLRHLTDTTGTRFLVVTHHRMTMARMDRLFGVTMAERGVSSLVSVDLCQAEDLVEAESPAAVLA.

This is an uncharacterized protein from Rhodospirillum rubrum.